A 320-amino-acid chain; its full sequence is Lipoyl synthase (320 aa).

Residues 1 to 24 (MIGKLVRDLKIPDQRHPEKAHRPD) show a composition bias toward basic and acidic residues. The tract at residues 1–30 (MIGKLVRDLKIPDQRHPEKAHRPDNVQPKK) is disordered. Residues C60, C65, C71, C86, C90, C93, and S300 each contribute to the [4Fe-4S] cluster site. One can recognise a Radical SAM core domain in the interval 72-289 (WSQGHATMMI…EKAAYGKGFL (218 aa)).

The protein belongs to the radical SAM superfamily. Lipoyl synthase family. Requires [4Fe-4S] cluster as cofactor.

Its subcellular location is the cytoplasm. It catalyses the reaction [[Fe-S] cluster scaffold protein carrying a second [4Fe-4S](2+) cluster] + N(6)-octanoyl-L-lysyl-[protein] + 2 oxidized [2Fe-2S]-[ferredoxin] + 2 S-adenosyl-L-methionine + 4 H(+) = [[Fe-S] cluster scaffold protein] + N(6)-[(R)-dihydrolipoyl]-L-lysyl-[protein] + 4 Fe(3+) + 2 hydrogen sulfide + 2 5'-deoxyadenosine + 2 L-methionine + 2 reduced [2Fe-2S]-[ferredoxin]. It participates in protein modification; protein lipoylation via endogenous pathway; protein N(6)-(lipoyl)lysine from octanoyl-[acyl-carrier-protein]: step 2/2. In terms of biological role, catalyzes the radical-mediated insertion of two sulfur atoms into the C-6 and C-8 positions of the octanoyl moiety bound to the lipoyl domains of lipoate-dependent enzymes, thereby converting the octanoylated domains into lipoylated derivatives. This Cereibacter sphaeroides (strain ATCC 17029 / ATH 2.4.9) (Rhodobacter sphaeroides) protein is Lipoyl synthase.